Consider the following 870-residue polypeptide: Leucine--tRNA ligase (870 aa).

The 'HIGH' region motif lies at 42 to 52 (PYPSGKLHMGH). The short motif at 629 to 633 (KMSKS) is the 'KMSKS' region element. Residue K632 participates in ATP binding.

The protein belongs to the class-I aminoacyl-tRNA synthetase family.

The protein resides in the cytoplasm. It carries out the reaction tRNA(Leu) + L-leucine + ATP = L-leucyl-tRNA(Leu) + AMP + diphosphate. This is Leucine--tRNA ligase from Ectopseudomonas mendocina (strain ymp) (Pseudomonas mendocina).